The sequence spans 1957 residues: [F-actin]-monooxygenase MICAL2 (1957 aa).

Residues Gly-2–Glu-494 are monooxygenase domain. Residues Cys-97, Glu-116–Arg-118, Arg-123–Asn-125, Phe-183, Tyr-298, and Asp-398 contribute to the FAD site. Residues Asp-516–Glu-619 enclose the Calponin-homology (CH) domain. Phosphoserine is present on Ser-631. The Nuclear localization signal signature appears at Arg-660–Lys-681. Disordered regions lie at residues Arg-660 to Lys-714 and Gln-886 to His-942. Residues Asp-687–Lys-714 show a composition bias toward polar residues. Residues Pro-899–Asp-910 are compositionally biased toward pro residues. A compositionally biased stretch (low complexity) spans Pro-911–Pro-925. The LIM zinc-binding domain maps to Asp-1000–Asn-1062. Cys-1002, Cys-1005, His-1023, Cys-1026, Cys-1029, Cys-1032, Cys-1052, and His-1055 together coordinate Zn(2+). Disordered stretches follow at residues Ala-1070–Trp-1143, Ser-1168–Lys-1243, Val-1258–Pro-1345, Gly-1361–Pro-1431, Lys-1467–Cys-1626, and Glu-1675–Lys-1779. The segment covering Ser-1185 to Trp-1195 has biased composition (basic and acidic residues). A compositionally biased stretch (polar residues) spans Arg-1232–Lys-1243. Residues Leu-1275–Ser-1294 are compositionally biased toward low complexity. The span at Ser-1302 to Ser-1316 shows a compositional bias: polar residues. Positions Thr-1324–Asp-1363 are interaction with MAPK1. Basic and acidic residues-rich tracts occupy residues Ser-1388–Ser-1402 and Gly-1413–Pro-1431. Residues Val-1485 to Arg-1496 are compositionally biased toward low complexity. Positions Gly-1552 to Ser-1562 are enriched in basic and acidic residues. A compositionally biased stretch (polar residues) spans Cys-1570–Thr-1579. A Phosphoserine modification is found at Ser-1688. The segment covering Ala-1718–Thr-1733 has biased composition (pro residues). Over residues Ala-1751 to Ser-1762 the composition is skewed to low complexity. The bMERB domain maps to Lys-1796–Ser-1945.

Belongs to the Mical family. As to quaternary structure, interacts with PLXNA4. Interacts with RAB1B. Interacts with MAPK1/ERK2. Interacts with RAB35, RAB8A, RAB10, RAB13 and RAB15 (in their GTP-bound forms); binding to RAB35 is of low affinity compared to other Rab proteins; at least in case of RAB8A may bind 2 molecules of RAB8A simultaneously through a high and a low affinity binding site, respectively. May interact with MAPK1/ERK2. Interacts with CORO1C; this interaction recruits MICAL2 to the actin filaments. It depends on FAD as a cofactor.

It localises to the nucleus. It is found in the cytoplasm. It catalyses the reaction L-methionyl-[F-actin] + NADPH + O2 + H(+) = L-methionyl-(R)-S-oxide-[F-actin] + NADP(+) + H2O. With respect to regulation, specifically inhibited by CCG-1423, a small molecule inhibitor of SRF:MKL1/MRTF-A-dependent transcription. Functionally, methionine monooxygenase that promotes depolymerization of F-actin by mediating oxidation of residues 'Met-44' and 'Met-47' on actin to form methionine-sulfoxide, resulting in actin filament disassembly and preventing repolymerization. Regulates the disassembly of branched actin networks also by oxidizing ARP3B-containing ARP2/3 complexes leading to ARP3B dissociation from the network. Acts as a key regulator of the SRF signaling pathway elicited by nerve growth factor and serum: mediates oxidation and subsequent depolymerization of nuclear actin, leading to increase MKL1/MRTF-A presence in the nucleus and promote SRF:MKL1/MRTF-A-dependent gene transcription. Does not activate SRF:MKL1/MRTF-A through RhoA. In Homo sapiens (Human), this protein is [F-actin]-monooxygenase MICAL2.